Consider the following 756-residue polypeptide: Protein SDA1 homolog (756 aa).

Positions 227 to 282 (EEEEDEAVKEKRAKDNFRKKSLAHRVGKKTKGRITRLAKSKVDLKKAKQEEDNKLQ) form a coiled coil. Acidic residues-rich tracts occupy residues 494–514 (AGEE…EGWE) and 521–596 (ADDD…EEEE). 2 disordered regions span residues 494 to 615 (AGEE…VLRT) and 638 to 756 (AREN…RGRH). Positions 605–615 (QQKEKVEVLRT) are enriched in basic and acidic residues. Residues 647-656 (DMDQDDDENG) are compositionally biased toward acidic residues. The segment covering 677–691 (EEKLERIARAKEGRD) has biased composition (basic and acidic residues). The segment covering 725 to 735 (KTKKVRGKSLK) has biased composition (basic residues). The segment covering 736 to 749 (SFRDKQIGQREHSA) has biased composition (basic and acidic residues).

The protein belongs to the SDA1 family.

The protein resides in the nucleus. The protein localises to the nucleolus. Functionally, required for 60S pre-ribosomal subunits export to the cytoplasm. In Dictyostelium discoideum (Social amoeba), this protein is Protein SDA1 homolog (sdad1).